Reading from the N-terminus, the 172-residue chain is 2S seed storage-like protein (172 aa).

Residues 1-35 form the signal peptide; that stretch reads MGVFSPSTTRLTLKWFSLSVALFLLFHWGIPSVDG. The tract at residues 108 to 172 is disordered; sequence FMDSDSQEDA…RYSMTGSSFK (65 aa). Basic and acidic residues predominate over residues 151–160; sequence EPPRRCDIQR.

This sequence belongs to the 2S seed storage albumins family.

The chain is 2S seed storage-like protein from Picea glauca (White spruce).